A 166-amino-acid chain; its full sequence is Lipoprotein signal peptidase (166 aa).

A run of 4 helical transmembrane segments spans residues 11–31 (LNLVIILVVFIFDRTTKLYIL), 42–62 (IYITPFLNLFLIWNKGIAFGL), 69–89 (VIYNSITILIGLIIIAIIFMM), and 99–119 (FFALIAGGAFGNFYDRIVYTA). Active-site residues include aspartate 122 and aspartate 140. Residues 133 to 153 (WFVFNVADIFITIGVFCLILV) traverse the membrane as a helical segment.

Belongs to the peptidase A8 family.

It localises to the cell inner membrane. The catalysed reaction is Release of signal peptides from bacterial membrane prolipoproteins. Hydrolyzes -Xaa-Yaa-Zaa-|-(S,diacylglyceryl)Cys-, in which Xaa is hydrophobic (preferably Leu), and Yaa (Ala or Ser) and Zaa (Gly or Ala) have small, neutral side chains.. It functions in the pathway protein modification; lipoprotein biosynthesis (signal peptide cleavage). In terms of biological role, this protein specifically catalyzes the removal of signal peptides from prolipoproteins. The sequence is that of Lipoprotein signal peptidase from Pelagibacter ubique (strain HTCC1062).